A 107-amino-acid chain; its full sequence is Proteinase inhibitor 1 (107 aa).

The signal sequence occupies residues 1-23 (MELKFAHIIVFFLLATSFETLMA). Residues 24–36 (RKESDGPEVIQLL) constitute a propeptide that is removed on maturation.

This sequence belongs to the protease inhibitor I13 (potato type I serine protease inhibitor) family.

The chain is Proteinase inhibitor 1 from Solanum tuberosum (Potato).